The following is a 229-amino-acid chain: Cytidylate kinase (229 aa).

Residue 12 to 20 (GPSGSGKGT) participates in ATP binding.

It belongs to the cytidylate kinase family. Type 1 subfamily.

Its subcellular location is the cytoplasm. It carries out the reaction CMP + ATP = CDP + ADP. The enzyme catalyses dCMP + ATP = dCDP + ADP. The protein is Cytidylate kinase of Pseudomonas syringae pv. tomato (strain ATCC BAA-871 / DC3000).